The following is a 256-amino-acid chain: Proteasome subunit alpha (256 aa).

The disordered stretch occupies residues 226–256 (LLPSQEESGSTDGEASGDAGDDKKTGDDKKS). The span at 245-256 (GDDKKTGDDKKS) shows a compositional bias: basic and acidic residues.

This sequence belongs to the peptidase T1A family. In terms of assembly, the 20S proteasome core is composed of 14 alpha and 14 beta subunits that assemble into four stacked heptameric rings, resulting in a barrel-shaped structure. The two inner rings, each composed of seven catalytic beta subunits, are sandwiched by two outer rings, each composed of seven alpha subunits. The catalytic chamber with the active sites is on the inside of the barrel. Has a gated structure, the ends of the cylinder being occluded by the N-termini of the alpha-subunits. Is capped by the proteasome-associated ATPase, ARC.

The protein localises to the cytoplasm. It participates in protein degradation; proteasomal Pup-dependent pathway. With respect to regulation, the formation of the proteasomal ATPase ARC-20S proteasome complex, likely via the docking of the C-termini of ARC into the intersubunit pockets in the alpha-rings, may trigger opening of the gate for substrate entry. Interconversion between the open-gate and close-gate conformations leads to a dynamic regulation of the 20S proteasome proteolysis activity. In terms of biological role, component of the proteasome core, a large protease complex with broad specificity involved in protein degradation. In Saccharopolyspora erythraea (strain ATCC 11635 / DSM 40517 / JCM 4748 / NBRC 13426 / NCIMB 8594 / NRRL 2338), this protein is Proteasome subunit alpha.